Here is a 124-residue protein sequence, read N- to C-terminus: Succinate dehydrogenase cytochrome b556 subunit (124 aa).

The Cytoplasmic portion of the chain corresponds to methionine 1–leucine 29. The helical transmembrane segment at serine 30–lysine 55 threads the bilayer. The Periplasmic portion of the chain corresponds to tyrosine 56–cysteine 67. A helical membrane pass occupies residues isoleucine 68 to isoleucine 88. Histidine 83 serves as a coordination point for heme. The Cytoplasmic portion of the chain corresponds to arginine 89–alanine 103. A helical transmembrane segment spans residues valine 104–valine 124.

This sequence belongs to the cytochrome b560 family. In terms of assembly, part of an enzyme complex containing four subunits: a flavoprotein, an iron-sulfur protein, plus two membrane-anchoring proteins, SdhC and SdhD. The complex can form homotrimers. Heme is required as a cofactor.

It localises to the cell inner membrane. Its pathway is carbohydrate metabolism; tricarboxylic acid cycle. In terms of biological role, membrane-anchoring subunit of succinate dehydrogenase (SDH). In Rickettsia prowazekii (strain Madrid E), this protein is Succinate dehydrogenase cytochrome b556 subunit (sdhC).